We begin with the raw amino-acid sequence, 147 residues long: Globin (147 aa).

The Globin domain maps to 1–147; that stretch reads GLSAEQKTAL…LLGVLIENHQ (147 aa). Residues His66 and His98 each coordinate heme b.

This sequence belongs to the globin family. Homodimer.

The polypeptide is Globin (Tritia mutabilis (Sea snail)).